The chain runs to 274 residues: 4-hydroxy-3-methylbut-2-enyl diphosphate reductase (274 aa).

Position 12 (C12) interacts with [4Fe-4S] cluster. Residues H36 and H70 each coordinate (2E)-4-hydroxy-3-methylbut-2-enyl diphosphate. Dimethylallyl diphosphate contacts are provided by H36 and H70. Residues H36 and H70 each contribute to the isopentenyl diphosphate site. C92 contributes to the [4Fe-4S] cluster binding site. Residue H120 participates in (2E)-4-hydroxy-3-methylbut-2-enyl diphosphate binding. H120 contributes to the dimethylallyl diphosphate binding site. Residue H120 participates in isopentenyl diphosphate binding. E122 (proton donor) is an active-site residue. T158 provides a ligand contact to (2E)-4-hydroxy-3-methylbut-2-enyl diphosphate. [4Fe-4S] cluster is bound at residue C186. The (2E)-4-hydroxy-3-methylbut-2-enyl diphosphate site is built by S214, S215, N216, and S258. Dimethylallyl diphosphate contacts are provided by S214, S215, N216, and S258. Isopentenyl diphosphate-binding residues include S214, S215, N216, and S258.

It belongs to the IspH family. The cofactor is [4Fe-4S] cluster.

The catalysed reaction is isopentenyl diphosphate + 2 oxidized [2Fe-2S]-[ferredoxin] + H2O = (2E)-4-hydroxy-3-methylbut-2-enyl diphosphate + 2 reduced [2Fe-2S]-[ferredoxin] + 2 H(+). It catalyses the reaction dimethylallyl diphosphate + 2 oxidized [2Fe-2S]-[ferredoxin] + H2O = (2E)-4-hydroxy-3-methylbut-2-enyl diphosphate + 2 reduced [2Fe-2S]-[ferredoxin] + 2 H(+). It functions in the pathway isoprenoid biosynthesis; dimethylallyl diphosphate biosynthesis; dimethylallyl diphosphate from (2E)-4-hydroxy-3-methylbutenyl diphosphate: step 1/1. Its pathway is isoprenoid biosynthesis; isopentenyl diphosphate biosynthesis via DXP pathway; isopentenyl diphosphate from 1-deoxy-D-xylulose 5-phosphate: step 6/6. Catalyzes the conversion of 1-hydroxy-2-methyl-2-(E)-butenyl 4-diphosphate (HMBPP) into a mixture of isopentenyl diphosphate (IPP) and dimethylallyl diphosphate (DMAPP). Acts in the terminal step of the DOXP/MEP pathway for isoprenoid precursor biosynthesis. The sequence is that of 4-hydroxy-3-methylbut-2-enyl diphosphate reductase from Helicobacter pylori (strain P12).